A 404-amino-acid polypeptide reads, in one-letter code: Glucose-1-phosphate adenylyltransferase (404 aa).

Alpha-D-glucose 1-phosphate-binding positions include Tyr99, Gly164, 179–180 (EK), and Ser197.

This sequence belongs to the bacterial/plant glucose-1-phosphate adenylyltransferase family.

The catalysed reaction is alpha-D-glucose 1-phosphate + ATP + H(+) = ADP-alpha-D-glucose + diphosphate. It functions in the pathway capsule biogenesis; capsule polysaccharide biosynthesis. Its pathway is glycan biosynthesis; glycogen biosynthesis. Its function is as follows. Involved in the biosynthesis of ADP-glucose, a building block, required in the biosynthesis of maltose-1-phosphate (M1P) and in the elongation reactions to produce linear alpha-1,4-glucans. Catalyzes the reaction between ATP and alpha-D-glucose 1-phosphate (G1P) to produce pyrophosphate and ADP-Glc. This is Glucose-1-phosphate adenylyltransferase from Mycolicibacterium paratuberculosis (strain ATCC BAA-968 / K-10) (Mycobacterium paratuberculosis).